We begin with the raw amino-acid sequence, 266 residues long: Glutamate racemase (266 aa).

Substrate-binding positions include aspartate 9–serine 10 and tyrosine 41–glycine 42. The Proton donor/acceptor role is filled by cysteine 72. Asparagine 73–threonine 74 contributes to the substrate binding site. The active-site Proton donor/acceptor is the cysteine 183. Threonine 184–histidine 185 serves as a coordination point for substrate.

This sequence belongs to the aspartate/glutamate racemases family.

It catalyses the reaction L-glutamate = D-glutamate. It participates in cell wall biogenesis; peptidoglycan biosynthesis. Provides the (R)-glutamate required for cell wall biosynthesis. The chain is Glutamate racemase from Listeria monocytogenes serotype 4a (strain HCC23).